The sequence spans 253 residues: Glucosamine-6-phosphate deaminase (253 aa).

The active-site Proton acceptor; for enolization step is Asp67. The active-site For ring-opening step is the Asn136. His138 (proton acceptor; for ring-opening step) is an active-site residue. The active-site For ring-opening step is Glu143.

Belongs to the glucosamine/galactosamine-6-phosphate isomerase family. NagB subfamily.

It catalyses the reaction alpha-D-glucosamine 6-phosphate + H2O = beta-D-fructose 6-phosphate + NH4(+). Its pathway is amino-sugar metabolism; N-acetylneuraminate degradation; D-fructose 6-phosphate from N-acetylneuraminate: step 5/5. Functionally, catalyzes the reversible isomerization-deamination of glucosamine 6-phosphate (GlcN6P) to form fructose 6-phosphate (Fru6P) and ammonium ion. This is Glucosamine-6-phosphate deaminase from Thermoanaerobacter pseudethanolicus (strain ATCC 33223 / 39E) (Clostridium thermohydrosulfuricum).